The sequence spans 263 residues: Ribonuclease HII (263 aa).

In terms of domain architecture, RNase H type-2 spans 39–257 (AFFTGIDEAG…VKPAAAPHAA (219 aa)). 3 residues coordinate a divalent metal cation: aspartate 45, glutamate 46, and aspartate 157.

It belongs to the RNase HII family. The cofactor is Mn(2+). Mg(2+) is required as a cofactor.

It is found in the cytoplasm. The enzyme catalyses Endonucleolytic cleavage to 5'-phosphomonoester.. Endonuclease that specifically degrades the RNA of RNA-DNA hybrids. The chain is Ribonuclease HII from Oleidesulfovibrio alaskensis (strain ATCC BAA-1058 / DSM 17464 / G20) (Desulfovibrio alaskensis).